A 412-amino-acid chain; its full sequence is Class E basic helix-loop-helix protein 40 (412 aa).

The essential for interaction with BMAL1, E-box binding and repressor activity against the CLOCK-BMAL1 heterodimer stretch occupies residues 1 to 139 (MERIPSAQPP…LSGRNVETGQ (139 aa)). A bHLH domain is found at 52-107 (TYKLPHRLIEKKRRDRINECIAQLKDLLPEHLKLTTLGHLEKAVVLELTLKHVKAL). The tract at residues 75–79 (LKDLL) is necessary for interaction with RXRA and repressor activity against RXRA. An Orange domain is found at 142 to 175 (FCSGFQTCAREVLQYLAKHENTRDLKSSQLVTHL). K159 participates in a covalent cross-link: Glycyl lysine isopeptide (Lys-Gly) (interchain with G-Cter in SUMO1, SUMO2 and SUMO3). Residue K167 forms a Glycyl lysine isopeptide (Lys-Gly) (interchain with G-Cter in SUMO2) linkage. 2 disordered regions span residues 183–259 (LQGG…SEQL) and 275–309 (IGAI…LISS). At S235 the chain carries Phosphoserine. Basic and acidic residues predominate over residues 248-259 (ESEKGDLRSEQL). K279 participates in a covalent cross-link: Glycyl lysine isopeptide (Lys-Gly) (interchain with G-Cter in SUMO1); alternate. Residue K279 forms a Glycyl lysine isopeptide (Lys-Gly) (interchain with G-Cter in SUMO1, SUMO2 and SUMO3); alternate linkage. K279 participates in a covalent cross-link: Glycyl lysine isopeptide (Lys-Gly) (interchain with G-Cter in SUMO2); alternate. K288 participates in a covalent cross-link: Glycyl lysine isopeptide (Lys-Gly) (interchain with G-Cter in SUMO2). S383 bears the Phosphoserine mark.

Homodimer. Heterodimer with BHLHE41/DEC2. Interacts with TCF3/E47. Interacts with ubiquitin-conjugating enzyme UBE2I/UBC9. Interacts with HDAC1, SUMO1, RXRA and BMAL1. In terms of processing, ubiquitinated; which may lead to proteasomal degradation. Sumoylation inhibits its ubiquitination and promotes its negative regulation of the CLOCK-BMAL1 heterodimer transcriptional activator activity.

The protein resides in the cytoplasm. The protein localises to the nucleus. Its function is as follows. Transcriptional repressor involved in the regulation of the circadian rhythm by negatively regulating the activity of the clock genes and clock-controlled genes. Acts as the negative limb of a novel autoregulatory feedback loop (DEC loop) which differs from the one formed by the PER and CRY transcriptional repressors (PER/CRY loop). Both these loops are interlocked as it represses the expression of PER1/2 and in turn is repressed by PER1/2 and CRY1/2. Represses the activity of the circadian transcriptional activator: CLOCK-BMAL1|BMAL2 heterodimer by competing for the binding to E-box elements (5'-CACGTG-3') found within the promoters of its target genes. Negatively regulates its own expression and the expression of DBP and BHLHE41/DEC2. Acts as a corepressor of RXR and the RXR-LXR heterodimers and represses the ligand-induced RXRA and NR1H3/LXRA transactivation activity. May be involved in the regulation of chondrocyte differentiation via the cAMP pathway. Represses the transcription of NR0B2 and attentuates the transactivation of NR0B2 by the CLOCK-BMAL1 complex. Drives the circadian rhythm of blood pressure through transcriptional repression of ATP1B1 in the cardiovascular system. The protein is Class E basic helix-loop-helix protein 40 (BHLHE40) of Pongo abelii (Sumatran orangutan).